Consider the following 348-residue polypeptide: MSVQLTERQRQILRHVVEEYLRSGRAVGSKALVERASLSVSPATVRNDMSVLEALDFLAHPHTSAGRVPTEHGLRYYVQHLMEESQLSSEEQLMIRHQFRQVEQQVPSWLKLAASVLAETSGNVGLVTPPRARVERLRHFELISLRRRVVLLVLVTQSGTIHQSLLELPQPLEQEELSALSQRLNPELRWLDRAAIERRAQGAEPTVALVLQRLAEALHFIEHQQRSELYAEGLEHVIRQPEFAQANLAHLLLEVLRGGMLLTWLLPRLDPSEEVRVLIGSDLALRELRPFSLILTAYRSGAESTGWLGVLGPQRMAYARAVAAVRFLASVVSELMSELSGGPDREGG.

This sequence belongs to the HrcA family.

Functionally, negative regulator of class I heat shock genes (grpE-dnaK-dnaJ and groELS operons). Prevents heat-shock induction of these operons. This Thermomicrobium roseum (strain ATCC 27502 / DSM 5159 / P-2) protein is Heat-inducible transcription repressor HrcA.